We begin with the raw amino-acid sequence, 160 residues long: Na(+)/H(+) antiporter subunit E1 (160 aa).

4 helical membrane-spanning segments follow: residues 1–21 (MAIQ…VTGS), 27–47 (FILG…VLPG), 49–69 (FYLI…IELI), and 101–121 (WQIV…VLGI).

The protein belongs to the CPA3 antiporters (TC 2.A.63) subunit E family. May form a heterooligomeric complex that consists of seven subunits: mnhA1, mnhB1, mnhC1, mnhD1, mnhE1, mnhF1 and mnhG1.

The protein localises to the cell membrane. Its function is as follows. Mnh complex is a Na(+)/H(+) antiporter involved in Na(+) excretion. The chain is Na(+)/H(+) antiporter subunit E1 (mnhE1) from Staphylococcus saprophyticus subsp. saprophyticus (strain ATCC 15305 / DSM 20229 / NCIMB 8711 / NCTC 7292 / S-41).